The following is a 372-amino-acid chain: 4-hydroxy-3-methylbut-2-en-1-yl diphosphate synthase (flavodoxin) (372 aa).

[4Fe-4S] cluster-binding residues include cysteine 270, cysteine 273, cysteine 305, and glutamate 312.

This sequence belongs to the IspG family. Requires [4Fe-4S] cluster as cofactor.

It carries out the reaction (2E)-4-hydroxy-3-methylbut-2-enyl diphosphate + oxidized [flavodoxin] + H2O + 2 H(+) = 2-C-methyl-D-erythritol 2,4-cyclic diphosphate + reduced [flavodoxin]. The protein operates within isoprenoid biosynthesis; isopentenyl diphosphate biosynthesis via DXP pathway; isopentenyl diphosphate from 1-deoxy-D-xylulose 5-phosphate: step 5/6. Its function is as follows. Converts 2C-methyl-D-erythritol 2,4-cyclodiphosphate (ME-2,4cPP) into 1-hydroxy-2-methyl-2-(E)-butenyl 4-diphosphate. This Shewanella amazonensis (strain ATCC BAA-1098 / SB2B) protein is 4-hydroxy-3-methylbut-2-en-1-yl diphosphate synthase (flavodoxin).